We begin with the raw amino-acid sequence, 429 residues long: S-adenosylmethionine synthase (429 aa).

ATP is bound at residue histidine 14. Position 16 (aspartate 16) interacts with Mg(2+). Glutamate 42 contacts K(+). The L-methionine site is built by glutamate 55 and glutamine 98. The flexible loop stretch occupies residues 98-108 (QSADINRGVDR). Residues 165 to 167 (DAK), 252 to 253 (KF), aspartate 261, 267 to 268 (RK), alanine 284, and lysine 288 each bind ATP. Aspartate 261 serves as a coordination point for L-methionine. An L-methionine-binding site is contributed by lysine 292.

It belongs to the AdoMet synthase family. Homotetramer; dimer of dimers. The cofactor is Mg(2+). K(+) is required as a cofactor.

Its subcellular location is the cytoplasm. The catalysed reaction is L-methionine + ATP + H2O = S-adenosyl-L-methionine + phosphate + diphosphate. It functions in the pathway amino-acid biosynthesis; S-adenosyl-L-methionine biosynthesis; S-adenosyl-L-methionine from L-methionine: step 1/1. Functionally, catalyzes the formation of S-adenosylmethionine (AdoMet) from methionine and ATP. The overall synthetic reaction is composed of two sequential steps, AdoMet formation and the subsequent tripolyphosphate hydrolysis which occurs prior to release of AdoMet from the enzyme. This chain is S-adenosylmethionine synthase, found in Porphyromonas gingivalis (strain ATCC BAA-308 / W83).